The sequence spans 342 residues: S-adenosylmethionine:tRNA ribosyltransferase-isomerase (342 aa).

This sequence belongs to the QueA family. Monomer.

The protein resides in the cytoplasm. The catalysed reaction is 7-aminomethyl-7-carbaguanosine(34) in tRNA + S-adenosyl-L-methionine = epoxyqueuosine(34) in tRNA + adenine + L-methionine + 2 H(+). The protein operates within tRNA modification; tRNA-queuosine biosynthesis. Transfers and isomerizes the ribose moiety from AdoMet to the 7-aminomethyl group of 7-deazaguanine (preQ1-tRNA) to give epoxyqueuosine (oQ-tRNA). The chain is S-adenosylmethionine:tRNA ribosyltransferase-isomerase from Streptococcus pyogenes serotype M6 (strain ATCC BAA-946 / MGAS10394).